The primary structure comprises 347 residues: Putative [LysW]-L-2-aminoadipate/[LysW]-L-glutamate phosphate reductase (347 aa).

9 to 12 (SGYI) serves as a coordination point for NADP(+). Residue cysteine 149 is part of the active site. Asparagine 314 provides a ligand contact to NADP(+).

This sequence belongs to the NAGSA dehydrogenase family. Type 1 subfamily. LysY sub-subfamily.

The protein localises to the cytoplasm. It carries out the reaction [amino-group carrier protein]-C-terminal-N-(1-carboxy-5-oxopentan-1-yl)-L-glutamine + phosphate + NADP(+) = [amino-group carrier protein]-C-terminal-N-(1-carboxy-5-phosphooxy-5-oxopentan-1-yl)-L-glutamine + NADPH + H(+). It catalyses the reaction [amino-group carrier protein]-C-terminal-gamma-(L-glutamyl-5-semialdehyde)-L-glutamate + phosphate + NADP(+) = [amino-group carrier protein]-C-terminal-gamma-(5-phospho-L-glutamyl)-L-glutamate + NADPH + H(+). It participates in amino-acid biosynthesis; L-lysine biosynthesis via AAA pathway; L-lysine from L-alpha-aminoadipate (Thermus route): step 3/5. It functions in the pathway amino-acid biosynthesis; L-arginine biosynthesis. Its function is as follows. Involved in both the arginine and lysine biosynthetic pathways. This chain is Putative [LysW]-L-2-aminoadipate/[LysW]-L-glutamate phosphate reductase, found in Picrophilus torridus (strain ATCC 700027 / DSM 9790 / JCM 10055 / NBRC 100828 / KAW 2/3).